Here is a 278-residue protein sequence, read N- to C-terminus: Putative glycosyltransferase EpsE (278 aa).

The protein belongs to the glycosyltransferase 2 family.

In terms of biological role, may be involved in the production of the exopolysaccharide (EPS) component of the extracellular matrix during biofilm formation. EPS is responsible for the adhesion of chains of cells into bundles. Required for biofilm maintenance. The protein is Putative glycosyltransferase EpsE (epsE) of Bacillus subtilis (strain 168).